Here is a 204-residue protein sequence, read N- to C-terminus: Inactive ribonuclease-like protein 9 (204 aa).

The first 26 residues, M1 to L26, serve as a signal peptide directing secretion. 3 disulfides stabilise this stretch: C97–C152, C115–C167, and C122–C129. N-linked (GlcNAc...) asparagine glycosylation is found at N130 and N142.

This sequence belongs to the pancreatic ribonuclease family.

The protein localises to the secreted. Its function is as follows. Does not exhibit any ribonuclease activity. In Chlorocebus pygerythrus (Vervet monkey), this protein is Inactive ribonuclease-like protein 9 (RNASE9).